A 427-amino-acid polypeptide reads, in one-letter code: MTEAMNITLSTQPADARWGDKATYSINNDGITLHLNGNDDLGLIQRAARKIDGLGIKQVALTGEGWDIERCWAFWAGYKGPKGVRTVMWPDLDDAQRQELDNRLTIIDWVRDTINAPAEELGPEQLAQRAVDLLCSVACDHVTYRITKGEDLREQNYMGLHTVGRGSERSPVLLALDYNPTGDKDAPVYACLVGKGITFDSGGYSIKQSAFMDSMKSDMGGAATVTGALAFAITRGLNKRVKLFLCCADNLISGNAFKLGDIIRYRNGKNVEVMNTDAEGRLVLADGLIDASAQHPQLIIDMATLTGAAKTALGNDYHALFSFDDTLAGRLLSSAAQENEPFWRLPLAEFHRNQLPSNFAELNNTGSAAYPAGASTAAGFLSHFVENYREGWLHIDCSATYRKAPVEQWAAGATGLGVRTIANLLTA.

Mn(2+)-binding residues include Lys195 and Asp200. Lys207 is a catalytic residue. Mn(2+)-binding residues include Asp218, Asp277, and Glu279. Arg281 is a catalytic residue.

The protein belongs to the peptidase M17 family. As to quaternary structure, homohexamer. It depends on Mn(2+) as a cofactor.

It is found in the cytoplasm. It carries out the reaction Release of an N-terminal amino acid, Xaa, from a peptide or arylamide. Xaa is preferably Glu or Asp but may be other amino acids, including Leu, Met, His, Cys and Gln.. Probably plays an important role in intracellular peptide degradation. The sequence is that of Peptidase B from Salmonella arizonae (strain ATCC BAA-731 / CDC346-86 / RSK2980).